Consider the following 132-residue polypeptide: uncharacterized protein (132 aa).

The tract at residues 113–132 (LDPQSPLHSPPLSTSPDSRR) is disordered.

This is an uncharacterized protein from Saccharomyces cerevisiae (strain ATCC 204508 / S288c) (Baker's yeast).